The following is a 1842-amino-acid chain: Plexin-B2 (1842 aa).

Residues 1-19 form the signal peptide; the sequence is MALPLWALTFLGLTGLGLS. The Sema domain maps to 20–468; sequence LRSRKPESFR…TQDKVFRLPV (449 aa). Residues 20–1201 are Extracellular-facing; the sequence is LRSRKPESFR…EYDTRASDVP (1182 aa). 2 disulfide bridges follow: cysteine 78/cysteine 87 and cysteine 112/cysteine 120. N-linked (GlcNAc...) asparagine glycans are attached at residues asparagine 127 and asparagine 242. 3 disulfide bridges follow: cysteine 250–cysteine 366, cysteine 266–cysteine 313, and cysteine 331–cysteine 353. N-linked (GlcNAc...) asparagine glycosylation is found at asparagine 393 and asparagine 451. Disulfide bonds link cysteine 471–cysteine 488, cysteine 477–cysteine 520, cysteine 480–cysteine 497, cysteine 491–cysteine 503, and cysteine 557–cysteine 576. N-linked (GlcNAc...) asparagine glycosylation occurs at asparagine 798. 3 IPT/TIG domains span residues 806–895, 898–982, and 986–1095; these read PVIT…QFTY, PQPL…SFTY, and PMIR…VFEY. N-linked (GlcNAc...) asparagine glycosylation is found at asparagine 919, asparagine 1053, and asparagine 1072. A helical membrane pass occupies residues 1202–1222; that stretch reads LSLILPLVMVPMVFIIVVSIY. Residues 1223–1842 are Cytoplasmic-facing; sequence CYWRKSQQAE…AALENKVTDL (620 aa). 3 positions are modified to phosphoserine: serine 1240, serine 1248, and serine 1574.

It belongs to the plexin family. As to quaternary structure, monomer, and heterodimer with PLXNB1. Interacts with MET, ARHGEF11 and ARHGEF12. May also interact with MST1R. In terms of tissue distribution, detected in macrophages from spleen and bone marrow (at protein level). Detected in granule cells in the developing cerebellum, dentate gyrus and olfactory bulb. Expressed in neurons and glia in the developing hippocampus.

It is found in the cell membrane. Functionally, cell surface receptor for SEMA4C, SEMA4D and SEMA4G that plays an important role in cell-cell signaling. Plays a role in glutamatergic synapse development and is required for SEMA4A-mediated excitatory synapse development. Binding to class 4 semaphorins promotes downstream activation of RHOA and phosphorylation of ERBB2 at 'Tyr-1248'. Also acts as a cell surface receptor for angiogenin (ANG); promoting ANG endocytosis and translocation to the cytoplasm or nucleus. Required for normal differentiation and migration of neuronal cells during brain corticogenesis and for normal embryonic brain development. Regulates the migration of cerebellar granule cells in the developing brain. Plays a role in RHOA activation and subsequent changes of the actin cytoskeleton. Plays a role in axon guidance, invasive growth and cell migration. May modulate the activity of RAC1 and CDC42. Down-regulates macrophage migration in wound-healing assays (in vitro). The sequence is that of Plexin-B2 from Mus musculus (Mouse).